We begin with the raw amino-acid sequence, 428 residues long: Folylpolyglutamate synthase (428 aa).

49-52 (GKGS) is an ATP binding site. Serine 73 provides a ligand contact to Mg(2+). Positions 75 and 82 each coordinate (6R)-5,10-methylenetetrahydrofolyl-(gamma-L-Glu)n. The Mg(2+) site is built by glutamate 143 and histidine 170. N6-carboxylysine is present on lysine 185. ATP is bound by residues asparagine 264, arginine 300, and 313 to 316 (DGAH). Serine 417 serves as a coordination point for (6R)-5,10-methylenetetrahydrofolyl-(gamma-L-Glu)n.

This sequence belongs to the folylpolyglutamate synthase family. In terms of assembly, monomer. Mg(2+) serves as cofactor.

The catalysed reaction is (6S)-5,6,7,8-tetrahydrofolyl-(gamma-L-Glu)(n) + L-glutamate + ATP = (6S)-5,6,7,8-tetrahydrofolyl-(gamma-L-Glu)(n+1) + ADP + phosphate + H(+). It carries out the reaction (6R)-5,10-methylenetetrahydrofolyl-(gamma-L-Glu)(n) + L-glutamate + ATP = (6R)-5,10-methylenetetrahydrofolyl-(gamma-L-Glu)(n+1) + ADP + phosphate + H(+). The enzyme catalyses 10-formyltetrahydrofolyl-(gamma-L-Glu)(n) + L-glutamate + ATP = 10-formyltetrahydrofolyl-(gamma-L-Glu)(n+1) + ADP + phosphate + H(+). Competitively inhibited by adenosine 5'-(3-thio)triphosphate and beta,gamma-methylene-ATP. Involved in the conversion of folates to polyglutamate derivatives, and likely functions in the retention of cellular folate pools. Catalyzes successive MgATP-dependent additions of glutamate to a pteroylmonoglutamate substrate, with a high preference for 5,10-methylenetetrahydrofolate (mTHF). Thus, metabolizes mTHF to the tetraglutamate derivative, but longer glutamate chain length products are not observed. Tetrahydrofolate (H4PteGlu) and 10-formyl-H4PteGlu are poorer folate substrates. In contrast to E.coli FolC, this enzyme does not display dihydrofolate synthase activity. The protein is Folylpolyglutamate synthase of Lacticaseibacillus casei (Lactobacillus casei).